The sequence spans 478 residues: Protein nucleotidyltransferase YdiU (478 aa).

ATP is bound by residues Gly-83, Gly-85, Arg-86, Lys-106, Asp-118, Gly-119, Arg-169, and Arg-176. Asp-245 (proton acceptor) is an active-site residue. Mg(2+) contacts are provided by Asn-246 and Asp-255. An ATP-binding site is contributed by Asp-255.

This sequence belongs to the SELO family. Mg(2+) serves as cofactor. Requires Mn(2+) as cofactor.

The catalysed reaction is L-seryl-[protein] + ATP = 3-O-(5'-adenylyl)-L-seryl-[protein] + diphosphate. It catalyses the reaction L-threonyl-[protein] + ATP = 3-O-(5'-adenylyl)-L-threonyl-[protein] + diphosphate. It carries out the reaction L-tyrosyl-[protein] + ATP = O-(5'-adenylyl)-L-tyrosyl-[protein] + diphosphate. The enzyme catalyses L-histidyl-[protein] + UTP = N(tele)-(5'-uridylyl)-L-histidyl-[protein] + diphosphate. The catalysed reaction is L-seryl-[protein] + UTP = O-(5'-uridylyl)-L-seryl-[protein] + diphosphate. It catalyses the reaction L-tyrosyl-[protein] + UTP = O-(5'-uridylyl)-L-tyrosyl-[protein] + diphosphate. Functionally, nucleotidyltransferase involved in the post-translational modification of proteins. It can catalyze the addition of adenosine monophosphate (AMP) or uridine monophosphate (UMP) to a protein, resulting in modifications known as AMPylation and UMPylation. This Exiguobacterium sp. (strain ATCC BAA-1283 / AT1b) protein is Protein nucleotidyltransferase YdiU.